A 254-amino-acid polypeptide reads, in one-letter code: 2-dehydro-3-deoxy-D-gluconate 5-dehydrogenase (254 aa).

Catalysis depends on Y159, which acts as the Proton acceptor.

The protein belongs to the short-chain dehydrogenases/reductases (SDR) family.

It carries out the reaction 2-dehydro-3-deoxy-D-gluconate + NAD(+) = 3-deoxy-D-glycero-2,5-hexodiulosonate + NADH + H(+). Functionally, involved in the degradation of 3,6-anhydro-L-galactose, which is the major monomeric sugar of red macroalgae. Catalyzes the fourth step of the pathway, the reduction of 3-deoxy-D-glycero-2,5-hexodiulosonate (L-DDGal) to 2-dehydro-3-deoxy-D-gluconate (KDG). The polypeptide is 2-dehydro-3-deoxy-D-gluconate 5-dehydrogenase (Pseudoalteromonas atlantica (strain T6c / ATCC BAA-1087)).